Here is a 407-residue protein sequence, read N- to C-terminus: Peptidase T (407 aa).

Residue His-82 participates in Zn(2+) binding. Residue Asp-84 is part of the active site. Asp-143 contacts Zn(2+). The active-site Proton acceptor is Glu-177. Glu-178, Asp-200, and His-382 together coordinate Zn(2+).

It belongs to the peptidase M20B family. It depends on Zn(2+) as a cofactor.

Its subcellular location is the cytoplasm. It catalyses the reaction Release of the N-terminal residue from a tripeptide.. Cleaves the N-terminal amino acid of tripeptides. This chain is Peptidase T, found in Streptococcus pyogenes serotype M18 (strain MGAS8232).